The sequence spans 199 residues: Chaperone protein TorD (199 aa).

This sequence belongs to the TorD/DmsD family. TorD subfamily.

It is found in the cytoplasm. Its function is as follows. Involved in the biogenesis of TorA. Acts on TorA before the insertion of the molybdenum cofactor and, as a result, probably favors a conformation of the apoenzyme that is competent for acquiring the cofactor. The protein is Chaperone protein TorD of Escherichia coli O6:H1 (strain CFT073 / ATCC 700928 / UPEC).